The following is a 414-amino-acid chain: MFDTVCTLPLSADLFSQAIHPNEPVVSVGLSTGHVQTFRLPSEESSDDDDGTASNSSARNGKGHIDTMWRTRRHKGSCRCLGFGVDGEMLYSAGTDGLVKAAKAETGVVENKIAIPLAKDGSVDAPTIIHALSPQTLLLATDSSALHLYDLRIPFSNVSAKPQQTHHPHDDYISSLTPLPPSDTSTSGFSKQWVTTGGTTLAVTDLRRGVMVRSEDQGEELVSSVYIGGLASSGTSRGEKVLVGGSSGVLTLWEKGAWDDQDERIYVQREAGGGEALETLAVVPDELGKGKMVAIGLGSGGVKFVRIGMNKVVSEVMHDETEGVIGLGFDVEGRMVSGGGQVVKVWHEAVGSNDMDVDMAGGKRMFGGDSDDSDDDNDSEDSEQEQRQPVEPQRKRKKNKGKGKRDIIAFADID.

WD repeat units follow at residues 9–48 (PLSA…SSDD), 73–112 (RHKG…VENK), 118–159 (AKDG…SNVS), 222–263 (VSSV…DQDE), and 319–356 (DETE…NDMD). Positions 39–65 (RLPSEESSDDDDGTASNSSARNGKGHI) are disordered. Positions 357–414 (VDMAGGKRMFGGDSDDSDDDNDSEDSEQEQRQPVEPQRKRKKNKGKGKRDIIAFADID) are disordered. The span at 369–383 (DSDDSDDDNDSEDSE) shows a compositional bias: acidic residues. Over residues 394 to 403 (RKRKKNKGKG) the composition is skewed to basic residues.

Belongs to the WD repeat WDR55 family.

The protein resides in the nucleus. Its subcellular location is the nucleolus. The protein is WD repeat-containing protein jip5 (jip5) of Aspergillus clavatus (strain ATCC 1007 / CBS 513.65 / DSM 816 / NCTC 3887 / NRRL 1 / QM 1276 / 107).